Consider the following 435-residue polypeptide: Serine hydroxymethyltransferase (435 aa).

Residues L133 and 137 to 139 (GHL) contribute to the (6S)-5,6,7,8-tetrahydrofolate site. Position 242 is an N6-(pyridoxal phosphate)lysine (K242).

This sequence belongs to the SHMT family. As to quaternary structure, homodimer. The cofactor is pyridoxal 5'-phosphate.

The protein localises to the cytoplasm. The catalysed reaction is (6R)-5,10-methylene-5,6,7,8-tetrahydrofolate + glycine + H2O = (6S)-5,6,7,8-tetrahydrofolate + L-serine. The protein operates within one-carbon metabolism; tetrahydrofolate interconversion. It functions in the pathway amino-acid biosynthesis; glycine biosynthesis; glycine from L-serine: step 1/1. Its function is as follows. Catalyzes the reversible interconversion of serine and glycine with tetrahydrofolate (THF) serving as the one-carbon carrier. This reaction serves as the major source of one-carbon groups required for the biosynthesis of purines, thymidylate, methionine, and other important biomolecules. Also exhibits THF-independent aldolase activity toward beta-hydroxyamino acids, producing glycine and aldehydes, via a retro-aldol mechanism. This chain is Serine hydroxymethyltransferase, found in Hyphomonas neptunium (strain ATCC 15444).